A 172-amino-acid chain; its full sequence is Adenine phosphoribosyltransferase (172 aa).

This sequence belongs to the purine/pyrimidine phosphoribosyltransferase family. As to quaternary structure, homodimer.

The protein localises to the cytoplasm. The catalysed reaction is AMP + diphosphate = 5-phospho-alpha-D-ribose 1-diphosphate + adenine. It functions in the pathway purine metabolism; AMP biosynthesis via salvage pathway; AMP from adenine: step 1/1. Functionally, catalyzes a salvage reaction resulting in the formation of AMP, that is energically less costly than de novo synthesis. The protein is Adenine phosphoribosyltransferase of Staphylococcus aureus (strain bovine RF122 / ET3-1).